Here is a 480-residue protein sequence, read N- to C-terminus: Flap endonuclease 1 (480 aa).

The interval 1–106 (MGIKGLTKFI…SELEKRGEKR (106 aa)) is N-domain. Asp-34 is a Mg(2+) binding site. DNA-binding residues include Arg-47 and Arg-72. The Mg(2+) site is built by Asp-88, Glu-160, Glu-162, Asp-181, and Asp-183. The segment at 124 to 266 (EIKKQSGRTV…KTAYNLIKEY (143 aa)) is I-domain. Glu-160 serves as a coordination point for DNA. Gly-244 and Asp-246 together coordinate DNA. Asp-246 contributes to the Mg(2+) binding site. Residues 349–357 (TQRRLDTFF) are interaction with PCNA. The interval 379–461 (TKGKGKKREI…NIKNENVKED (83 aa)) is disordered. Residues 404 to 428 (NVKDEKKNNEKVDELKNKSDENLVK) show a composition bias toward basic and acidic residues. Over residues 429 to 438 (DEEDDQDDYD) the composition is skewed to acidic residues.

It belongs to the XPG/RAD2 endonuclease family. FEN1 subfamily. Interacts with PCNA. Three molecules of FEN1 bind to one PCNA trimer with each molecule binding to one PCNA monomer. PCNA stimulates the nuclease activity without altering cleavage specificity. Requires Mg(2+) as cofactor. Phosphorylated. Phosphorylation upon DNA damage induces relocalization to the nuclear plasma.

Its subcellular location is the nucleus. It localises to the nucleolus. The protein resides in the nucleoplasm. The protein localises to the mitochondrion. Inhibited by monovalent metal ions. Structure-specific nuclease with 5'-flap endonuclease and 5'-3' exonuclease activities involved in DNA replication and repair. During DNA replication, cleaves the 5'-overhanging flap structure that is generated by displacement synthesis when DNA polymerase encounters the 5'-end of a downstream Okazaki fragment. It enters the flap from the 5'-end and then tracks to cleave the flap base, leaving a nick for ligation. Also involved in the long patch base excision repair (LP-BER) pathway, by cleaving within the apurinic/apyrimidinic (AP) site-terminated flap. Acts as a genome stabilization factor that prevents flaps from equilibrating into structures that lead to duplications and deletions. Also possesses 5'-3' exonuclease activity on nicked or gapped double-stranded DNA, and exhibits RNase H activity. Also involved in replication and repair of rDNA and in repairing mitochondrial DNA. This Plasmodium yoelii yoelii protein is Flap endonuclease 1.